The primary structure comprises 453 residues: Tetrahydroanabasine acetyltransferase (453 aa).

Active-site proton acceptor residues include histidine 163 and aspartate 388.

The protein belongs to the plant acyltransferase family. Monomer.

The enzyme catalyses tetrahydroanabasine + acetyl-CoA = ammodendrine + CoA. Its pathway is alkaloid biosynthesis. Tetrahydroanabasine acetyltransferase involved in the accumulation of quinolizidine type antinutritional alkaloids (QAs). QAs impart a bitter taste to plants, acting as repellents and toxicants for herbivores and predators, and possess a variety of pharmacological effects, including sedative, anticonvulsant, anti-inflammatory, antiviral, antitumor, antipyretic, anti-hepatitis B, antifibrotic, antiallergic, antidiarrheal, analgesic and antimicrobial activities. Mediates the conversion of tetrahydroanabasine into ammodendrine. This chain is Tetrahydroanabasine acetyltransferase, found in Lupinus angustifolius (Narrow-leaved blue lupine).